Consider the following 506-residue polypeptide: Maturase K (506 aa).

The protein belongs to the intron maturase 2 family. MatK subfamily.

The protein localises to the plastid. The protein resides in the chloroplast. Functionally, usually encoded in the trnK tRNA gene intron. Probably assists in splicing its own and other chloroplast group II introns. The polypeptide is Maturase K (Trifolium beckwithii (Beckwith's clover)).